A 529-amino-acid chain; its full sequence is Glucose transporter 2A (529 aa).

The interval 1–22 is disordered; the sequence is MTERRDNVSHAPDAIEGPNDGA. The Cytoplasmic portion of the chain corresponds to 1 to 43; sequence MTERRDNVSHAPDAIEGPNDGAHAEDTSPGFFSFENLGVAQVQ. The chain crosses the membrane as a helical span at residues 44–64; it reads VVGGTLNGFSIGFVAVYILLY. Residues 65–119 are Extracellular-facing; it reads EVATNCSLFKTTEACKAVGSYGCEWKDTEVCSWKKECDSDSDGVNPCESLIGYSS. Residues 120-140 form a helical membrane-spanning segment; it reads LYSGIFASAMIVGSMVGSIIA. Residues 141–152 lie on the Cytoplasmic side of the membrane; it reads GKCITMFGLKKS. The chain crosses the membrane as a helical span at residues 153-173; the sequence is FIIVGVMSVVASALNHISVAT. At 174–175 the chain is on the extracellular side; the sequence is NE. Residues 176–196 traverse the membrane as a helical segment; the sequence is FWVLCAGRVLMGIGLGVVCVI. Residues 197–214 are Cytoplasmic-facing; sequence CPMYVNENAHPKLSKVDG. Residues 215–235 traverse the membrane as a helical segment; the sequence is VLFQVFITFGIMLAAMLGLIL. Residues 236–250 are Extracellular-facing; sequence DKTVNYDNDPDMAGR. The helical transmembrane segment at 251-271 threads the bilayer; the sequence is FHGFCAVSSVLSVAMFLVGMF. The Cytoplasmic portion of the chain corresponds to 272-300; that stretch reads LRESTATFSQDDDGKADGGMDPNEYGWGQ. A helical membrane pass occupies residues 301–321; that stretch reads MLWPLFMGAVTAGTLQLTGIN. Topologically, residues 322–339 are extracellular; sequence AVMNYAPKITENLGMDPS. A helical membrane pass occupies residues 340-360; it reads LGNFLVMAWNFVTSLVAIPLA. Residues 361-368 are Cytoplasmic-facing; it reads SRFTMRQM. A helical membrane pass occupies residues 369 to 389; it reads FITCSFVASCMCLFLCGIPVF. The Extracellular portion of the chain corresponds to 390-404; sequence PGVAEEKVKNGVATT. Residues 405 to 425 traverse the membrane as a helical segment; the sequence is GIALFIAAFEFGVGSCFFVLA. Residues 426-439 lie on the Cytoplasmic side of the membrane; the sequence is QDLFPPSFRPKGSS. Residues 440 to 460 form a helical membrane-spanning segment; that stretch reads FVVMMQFIFNILINLLYPITT. Over 461-476 the chain is Extracellular; the sequence is EAISGGATGDQDKGQA. A helical transmembrane segment spans residues 477–497; that stretch reads VVFILFGLIGLICFVLQFFYL. Over 498–529 the chain is Cytoplasmic; sequence YPYDANQDHENDHGTEPVERILSPVDVPTPRN. Positions 508 to 529 are disordered; that stretch reads NDHGTEPVERILSPVDVPTPRN.

Belongs to the major facilitator superfamily. Sugar transporter (TC 2.A.1.1) family.

Its subcellular location is the membrane. Its function is as follows. Facilitative glucose transporter. The polypeptide is Glucose transporter 2A (THT2A) (Trypanosoma brucei brucei).